A 946-amino-acid chain; its full sequence is Bifunctional glutamine synthetase adenylyltransferase/adenylyl-removing enzyme (946 aa).

Residues 1–440 (MKPLSSPLQQ…VFNELIGDDE (440 aa)) form an adenylyl removase region. The adenylyl transferase stretch occupies residues 449 to 946 (SEQWRELWQD…VSWQKWLVEE (498 aa)).

This sequence belongs to the GlnE family. Mg(2+) is required as a cofactor.

It carries out the reaction [glutamine synthetase]-O(4)-(5'-adenylyl)-L-tyrosine + phosphate = [glutamine synthetase]-L-tyrosine + ADP. It catalyses the reaction [glutamine synthetase]-L-tyrosine + ATP = [glutamine synthetase]-O(4)-(5'-adenylyl)-L-tyrosine + diphosphate. In terms of biological role, involved in the regulation of glutamine synthetase GlnA, a key enzyme in the process to assimilate ammonia. When cellular nitrogen levels are high, the C-terminal adenylyl transferase (AT) inactivates GlnA by covalent transfer of an adenylyl group from ATP to specific tyrosine residue of GlnA, thus reducing its activity. Conversely, when nitrogen levels are low, the N-terminal adenylyl removase (AR) activates GlnA by removing the adenylyl group by phosphorolysis, increasing its activity. The regulatory region of GlnE binds the signal transduction protein PII (GlnB) which indicates the nitrogen status of the cell. This is Bifunctional glutamine synthetase adenylyltransferase/adenylyl-removing enzyme from Escherichia coli (strain SMS-3-5 / SECEC).